The sequence spans 313 residues: Putative S-adenosyl-L-methionine-dependent methyltransferase MMAR_0955 (313 aa).

Residues Asp132 and 161-162 contribute to the S-adenosyl-L-methionine site; that span reads DL.

It belongs to the UPF0677 family.

Its function is as follows. Exhibits S-adenosyl-L-methionine-dependent methyltransferase activity. The sequence is that of Putative S-adenosyl-L-methionine-dependent methyltransferase MMAR_0955 from Mycobacterium marinum (strain ATCC BAA-535 / M).